The primary structure comprises 211 residues: ATP phosphoribosyltransferase (211 aa).

This sequence belongs to the ATP phosphoribosyltransferase family. Short subfamily. Heteromultimer composed of HisG and HisZ subunits.

The protein resides in the cytoplasm. The enzyme catalyses 1-(5-phospho-beta-D-ribosyl)-ATP + diphosphate = 5-phospho-alpha-D-ribose 1-diphosphate + ATP. It participates in amino-acid biosynthesis; L-histidine biosynthesis; L-histidine from 5-phospho-alpha-D-ribose 1-diphosphate: step 1/9. Functionally, catalyzes the condensation of ATP and 5-phosphoribose 1-diphosphate to form N'-(5'-phosphoribosyl)-ATP (PR-ATP). Has a crucial role in the pathway because the rate of histidine biosynthesis seems to be controlled primarily by regulation of HisG enzymatic activity. The chain is ATP phosphoribosyltransferase from Clostridium botulinum (strain 657 / Type Ba4).